The following is a 196-amino-acid chain: dITP/XTP pyrophosphatase (196 aa).

8–13 (TKNEGK) lines the substrate pocket. Mg(2+) is bound by residues E41 and D70. The active-site Proton acceptor is the D70. Substrate contacts are provided by residues S71, 153–156 (FGYD), K176, and 181–182 (HR).

It belongs to the HAM1 NTPase family. Homodimer. Mg(2+) serves as cofactor.

The enzyme catalyses XTP + H2O = XMP + diphosphate + H(+). It catalyses the reaction dITP + H2O = dIMP + diphosphate + H(+). It carries out the reaction ITP + H2O = IMP + diphosphate + H(+). Pyrophosphatase that catalyzes the hydrolysis of nucleoside triphosphates to their monophosphate derivatives, with a high preference for the non-canonical purine nucleotides XTP (xanthosine triphosphate), dITP (deoxyinosine triphosphate) and ITP. Seems to function as a house-cleaning enzyme that removes non-canonical purine nucleotides from the nucleotide pool, thus preventing their incorporation into DNA/RNA and avoiding chromosomal lesions. The chain is dITP/XTP pyrophosphatase from Bacillus licheniformis (strain ATCC 14580 / DSM 13 / JCM 2505 / CCUG 7422 / NBRC 12200 / NCIMB 9375 / NCTC 10341 / NRRL NRS-1264 / Gibson 46).